The following is a 411-amino-acid chain: Flavohemoprotein (411 aa).

Positions 5–142 (TLSQETKQIV…IADVFIQVEK (138 aa)) constitute a Globin domain. Residue histidine 89 participates in heme b binding. Catalysis depends on charge relay system residues tyrosine 99 and glutamate 141. A reductase region spans residues 153 to 411 (GGWREFRSFV…FGPAGTLASS (259 aa)). Residues 156-267 (REFRSFVVEK…TAPAGDFTLQ (112 aa)) form the FAD-binding FR-type domain. Residues tyrosine 194 and 210–213 (RQYS) each bind FAD. 280-285 (GVGITP) serves as a coordination point for NADP(+). 401–404 (FFGP) lines the FAD pocket.

It belongs to the globin family. Two-domain flavohemoproteins subfamily. This sequence in the C-terminal section; belongs to the flavoprotein pyridine nucleotide cytochrome reductase family. Heme b is required as a cofactor. FAD serves as cofactor.

It catalyses the reaction 2 nitric oxide + NADPH + 2 O2 = 2 nitrate + NADP(+) + H(+). The catalysed reaction is 2 nitric oxide + NADH + 2 O2 = 2 nitrate + NAD(+) + H(+). Its function is as follows. Is involved in NO detoxification in an aerobic process, termed nitric oxide dioxygenase (NOD) reaction that utilizes O(2) and NAD(P)H to convert NO to nitrate, which protects the bacterium from various noxious nitrogen compounds. Therefore, plays a central role in the inducible response to nitrosative stress. The protein is Flavohemoprotein of Halalkalibacterium halodurans (strain ATCC BAA-125 / DSM 18197 / FERM 7344 / JCM 9153 / C-125) (Bacillus halodurans).